Here is a 268-residue protein sequence, read N- to C-terminus: L-proline trans-4-hydroxylase (268 aa).

3 residues coordinate Fe cation: H113, D115, and H218.

This sequence belongs to the PhyH family. Monomer. Requires Fe(2+) as cofactor.

It carries out the reaction L-proline + 2-oxoglutarate + O2 = trans-4-hydroxy-L-proline + succinate + CO2. Its pathway is antibiotic biosynthesis. Its activity is regulated as follows. Competitively inhibited by pyridine-2,4-dicarboxylate. Inhibited by diethyl pyrocarbonate (DEPC), 3,4-dihydroxybenzoate, pyridine-2,5-dicarboxylate, alpha,alpha'-dipyridyl, and some metal ions such as Co(2+) and Zn(2+). Involved in the biosynthesis of the peptidolactone antibiotic etamycin (viridogrisein). Catalyzes the hydroxylation of free L-proline at the C-4 position to yield trans-4-hydroxy-L-proline. This Streptomyces griseoviridis protein is L-proline trans-4-hydroxylase.